Reading from the N-terminus, the 769-residue chain is Trehalose 6-phosphate phosphorylase (769 aa).

342-343 (WD) serves as a coordination point for substrate. Glu480 acts as the Proton donor in catalysis. 589 to 590 (KQ) serves as a coordination point for substrate.

This sequence belongs to the glycosyl hydrolase 65 family. In terms of assembly, monomer.

The enzyme catalyses alpha,alpha-trehalose 6-phosphate + phosphate = beta-D-glucose 1-phosphate + D-glucose 6-phosphate. Functionally, catalyzes the conversion of trehalose 6-phosphate into glucose 1-phosphate and glucose 6-phosphate. The protein is Trehalose 6-phosphate phosphorylase (trePP) of Lactococcus lactis subsp. lactis (strain IL1403) (Streptococcus lactis).